A 254-amino-acid chain; its full sequence is 5'/3'-nucleotidase SurE (254 aa).

A divalent metal cation contacts are provided by Asp-8, Asp-9, Ser-39, and Asn-92.

It belongs to the SurE nucleotidase family. A divalent metal cation serves as cofactor.

It localises to the cytoplasm. It carries out the reaction a ribonucleoside 5'-phosphate + H2O = a ribonucleoside + phosphate. The enzyme catalyses a ribonucleoside 3'-phosphate + H2O = a ribonucleoside + phosphate. It catalyses the reaction [phosphate](n) + H2O = [phosphate](n-1) + phosphate + H(+). Functionally, nucleotidase with a broad substrate specificity as it can dephosphorylate various ribo- and deoxyribonucleoside 5'-monophosphates and ribonucleoside 3'-monophosphates with highest affinity to 3'-AMP. Also hydrolyzes polyphosphate (exopolyphosphatase activity) with the preference for short-chain-length substrates (P20-25). Might be involved in the regulation of dNTP and NTP pools, and in the turnover of 3'-mononucleotides produced by numerous intracellular RNases (T1, T2, and F) during the degradation of various RNAs. This is 5'/3'-nucleotidase SurE from Edwardsiella ictaluri (strain 93-146).